Reading from the N-terminus, the 668-residue chain is RING finger protein 214 (668 aa).

Disordered regions lie at residues Met-1–Glu-87 and Asn-103–Arg-125. At Ala-2 the chain carries N-acetylalanine. 4 positions are modified to phosphoserine: Ser-15, Ser-40, Ser-48, and Ser-54. Positions Lys-43 to Lys-59 are enriched in polar residues. Positions Glu-60 to Glu-71 are enriched in basic and acidic residues. Ser-196 carries the post-translational modification Phosphoserine. Residues Gln-220–Thr-379 adopt a coiled-coil conformation. The interval Phe-486 to Val-552 is disordered. 3 positions are modified to phosphoserine: Ser-497, Ser-511, and Ser-516. Pro residues predominate over residues Pro-523–Gly-536. Residues Cys-623–Pro-665 form an RING-type; atypical zinc finger.

The chain is RING finger protein 214 (Rnf214) from Mus musculus (Mouse).